Reading from the N-terminus, the 576-residue chain is V-type ATP synthase alpha chain (576 aa).

238–245 contributes to the ATP binding site; that stretch reads GPFGAGKT.

The protein belongs to the ATPase alpha/beta chains family.

The catalysed reaction is ATP + H2O + 4 H(+)(in) = ADP + phosphate + 5 H(+)(out). Its function is as follows. Produces ATP from ADP in the presence of a proton gradient across the membrane. The V-type alpha chain is a catalytic subunit. The protein is V-type ATP synthase alpha chain of Borrelia duttonii (strain Ly).